The sequence spans 273 residues: Ribosomal RNA small subunit methyltransferase A (273 aa).

6 residues coordinate S-adenosyl-L-methionine: N18, L20, G45, E66, D91, and N113.

The protein belongs to the class I-like SAM-binding methyltransferase superfamily. rRNA adenine N(6)-methyltransferase family. RsmA subfamily.

The protein resides in the cytoplasm. It catalyses the reaction adenosine(1518)/adenosine(1519) in 16S rRNA + 4 S-adenosyl-L-methionine = N(6)-dimethyladenosine(1518)/N(6)-dimethyladenosine(1519) in 16S rRNA + 4 S-adenosyl-L-homocysteine + 4 H(+). Functionally, specifically dimethylates two adjacent adenosines (A1518 and A1519) in the loop of a conserved hairpin near the 3'-end of 16S rRNA in the 30S particle. May play a critical role in biogenesis of 30S subunits. The protein is Ribosomal RNA small subunit methyltransferase A of Shigella boydii serotype 4 (strain Sb227).